The following is a 291-amino-acid chain: 11-beta-hydroxysteroid dehydrogenase 1 (291 aa).

At 1–7 the chain is on the cytoplasmic side; it reads MAFMKTH. A helical; Signal-anchor for type II membrane protein transmembrane segment spans residues 8–24; it reads LLPILGLFMAYYYYSAY. At 25 to 291 the chain is on the lumenal side; the sequence is EEFRPEMLQG…TSYSTDGLIN (267 aa). Residues 41 to 67, 92 to 93, and 119 to 121 each bind NADP(+); these read GASKGIGREMAYHLAKMGAHVVVTARS, TM, and NHI. 2 N-linked (GlcNAc...) asparagine glycosylation sites follow: N123 and N162. S170 contributes to the substrate binding site. The active-site Proton acceptor is the Y183. 183–187 is a binding site for NADP(+); it reads YSASK. N-linked (GlcNAc...) asparagine glycosylation occurs at N207. 218-222 is an NADP(+) binding site; that stretch reads IDTDT.

The protein belongs to the short-chain dehydrogenases/reductases (SDR) family. As to quaternary structure, homodimer. In terms of tissue distribution, abundantly expressed in the liver, followed by fibroblasts, also detected in the brain, lung, heart, and ovary, and in smaller amounts in kidney, skin, and spleen.

The protein localises to the endoplasmic reticulum membrane. The enzyme catalyses an 11beta-hydroxysteroid + NADP(+) = an 11-oxosteroid + NADPH + H(+). It carries out the reaction cortisone + NADPH + H(+) = cortisol + NADP(+). It catalyses the reaction corticosterone + NADP(+) = 11-dehydrocorticosterone + NADPH + H(+). The catalysed reaction is a 7beta-hydroxysteroid + NADP(+) = a 7-oxosteroid + NADPH + H(+). The enzyme catalyses 7-oxocholesterol + NADPH + H(+) = 7beta-hydroxycholesterol + NADP(+). It carries out the reaction chenodeoxycholate + NADP(+) = 7-oxolithocholate + NADPH + H(+). It catalyses the reaction 7-oxolithocholate + NADPH + H(+) = ursodeoxycholate + NADP(+). The catalysed reaction is glycochenodeoxycholate + NADP(+) = 7-oxoglycolithocholate + NADPH + H(+). The enzyme catalyses taurochenodeoxycholate + NADP(+) = 7-oxotaurolithocholate + NADPH + H(+). It carries out the reaction tauroursodeoxycholate + NADP(+) = 7-oxotaurolithocholate + NADPH + H(+). It catalyses the reaction glycoursodeoxycholate + NADP(+) = 7-oxoglycolithocholate + NADPH + H(+). The catalysed reaction is 7-oxopregnenolone + NADPH + H(+) = 7beta-hydroxypregnenolone + NADP(+). The enzyme catalyses 3beta,7alpha-dihydroxyandrost-5-en-17-one + NADP(+) = 3beta-hydroxy-5-androstene-7,17-dione + NADPH + H(+). It carries out the reaction 3beta-hydroxy-5-androstene-7,17-dione + NADPH + H(+) = 3beta,7beta-dihydroxyandrost-5-en-17-one + NADP(+). It catalyses the reaction 3beta-hydroxy-5alpha-androstane-7,17-dione + NADPH + H(+) = 3beta,7beta-dihydroxy-5alpha-androstan-17-one + NADP(+). It participates in steroid metabolism. Functionally, controls the reversible conversion of biologically active glucocorticoids such as cortisone to cortisol, and 11-dehydrocorticosterone to corticosterone in the presence of NADP(H). Participates in the corticosteroid receptor-mediated anti-inflammatory response, as well as metabolic and homeostatic processes. Bidirectional in vitro, predominantly functions as a reductase in vivo, thereby increasing the concentration of active glucocorticoids. It has broad substrate specificity, besides glucocorticoids, it accepts other steroid and sterol substrates. Interconverts 7-oxo- and 7-hydroxy-neurosteroids such as 7-oxopregnenolone and 7beta-hydroxypregnenolone, 7-oxodehydroepiandrosterone (3beta-hydroxy-5-androstene-7,17-dione) and 7beta-hydroxydehydroepiandrosterone (3beta,7beta-dihydroxyandrost-5-en-17-one), among others. Catalyzes the stereo-specific conversion of the major dietary oxysterol, 7-ketocholesterol (7-oxocholesterol), into the more polar 7-beta-hydroxycholesterol metabolite. 7-oxocholesterol is one of the most important oxysterols, it participates in several events such as induction of apoptosis, accumulation in atherosclerotic lesions, lipid peroxidation, and induction of foam cell formation. Mediates the 7-oxo reduction of 7-oxolithocholate mainly to chenodeoxycholate, and to a lesser extent to ursodeoxycholate, both in its free form and when conjugated to glycine or taurine, providing a link between glucocorticoid activation and bile acid metabolism. Catalyzes the synthesis of 7-beta-25-dihydroxycholesterol from 7-oxo-25-hydroxycholesterol in vitro, which acts as a ligand for the G-protein-coupled receptor (GPCR) Epstein-Barr virus-induced gene 2 (EBI2) and may thereby regulate immune cell migration. The polypeptide is 11-beta-hydroxysteroid dehydrogenase 1 (HSD11B1) (Saimiri sciureus (Common squirrel monkey)).